The following is a 109-amino-acid chain: Phosphocarrier protein HPr (109 aa).

Residues 22–109 (ELSAVFTIRN…EVFNSGFGEL (88 aa)) form the HPr domain. His-36 serves as the catalytic Pros-phosphohistidine intermediate.

It belongs to the HPr family.

Its subcellular location is the cytoplasm. In terms of biological role, general (non sugar-specific) component of the phosphoenolpyruvate-dependent sugar phosphotransferase system (sugar PTS). This major carbohydrate active-transport system catalyzes the phosphorylation of incoming sugar substrates concomitantly with their translocation across the cell membrane. The phosphoryl group from phosphoenolpyruvate (PEP) is transferred to the phosphoryl carrier protein HPr by enzyme I. Phospho-HPr then transfers it to the PTS EIIA domain. The protein is Phosphocarrier protein HPr (ptsH) of Chlamydia trachomatis serovar D (strain ATCC VR-885 / DSM 19411 / UW-3/Cx).